The primary structure comprises 404 residues: Tryptophan synthase beta chain (404 aa).

The residue at position 98 (lysine 98) is an N6-(pyridoxal phosphate)lysine.

It belongs to the TrpB family. Tetramer of two alpha and two beta chains. Pyridoxal 5'-phosphate is required as a cofactor.

It catalyses the reaction (1S,2R)-1-C-(indol-3-yl)glycerol 3-phosphate + L-serine = D-glyceraldehyde 3-phosphate + L-tryptophan + H2O. Its pathway is amino-acid biosynthesis; L-tryptophan biosynthesis; L-tryptophan from chorismate: step 5/5. Functionally, the beta subunit is responsible for the synthesis of L-tryptophan from indole and L-serine. This is Tryptophan synthase beta chain from Rhodopseudomonas palustris (strain ATCC BAA-98 / CGA009).